Here is a 124-residue protein sequence, read N- to C-terminus: Small ribosomal subunit protein bS6 (124 aa).

Residues I101–A124 are disordered. Basic and acidic residues predominate over residues E105–A115.

Belongs to the bacterial ribosomal protein bS6 family.

Functionally, binds together with bS18 to 16S ribosomal RNA. The sequence is that of Small ribosomal subunit protein bS6 from Polynucleobacter asymbioticus (strain DSM 18221 / CIP 109841 / QLW-P1DMWA-1) (Polynucleobacter necessarius subsp. asymbioticus).